Consider the following 81-residue polypeptide: ATP synthase subunit c (81 aa).

Transmembrane regions (helical) follow at residues 7–27 (AASV…PGIG) and 57–77 (LAFM…LLFA).

Belongs to the ATPase C chain family. In terms of assembly, F-type ATPases have 2 components, F(1) - the catalytic core - and F(0) - the membrane proton channel. F(1) has five subunits: alpha(3), beta(3), gamma(1), delta(1), epsilon(1). F(0) has four main subunits: a(1), b(1), b'(1) and c(10-14). The alpha and beta chains form an alternating ring which encloses part of the gamma chain. F(1) is attached to F(0) by a central stalk formed by the gamma and epsilon chains, while a peripheral stalk is formed by the delta, b and b' chains.

It is found in the cellular thylakoid membrane. In terms of biological role, f(1)F(0) ATP synthase produces ATP from ADP in the presence of a proton or sodium gradient. F-type ATPases consist of two structural domains, F(1) containing the extramembraneous catalytic core and F(0) containing the membrane proton channel, linked together by a central stalk and a peripheral stalk. During catalysis, ATP synthesis in the catalytic domain of F(1) is coupled via a rotary mechanism of the central stalk subunits to proton translocation. Functionally, key component of the F(0) channel; it plays a direct role in translocation across the membrane. A homomeric c-ring of between 10-14 subunits forms the central stalk rotor element with the F(1) delta and epsilon subunits. The protein is ATP synthase subunit c of Synechococcus sp. (strain CC9311).